A 463-amino-acid chain; its full sequence is Glucagon-like peptide 1 receptor (463 aa).

An N-terminal signal peptide occupies residues 1–21 (MASTPSLLRLALLLLGAVGRA). Over 22 to 139 (GPRPQGTTVS…KRGERNFPEE (118 aa)) the chain is Extracellular. Intrachain disulfides connect Cys46–Cys71, Cys62–Cys104, and Cys85–Cys126. Residues Asn63, Asn82, and Asn115 are each glycosylated (N-linked (GlcNAc...) asparagine). The helical transmembrane segment at 140-164 (QLLSLYIIYTVGYALSFSALVIASA) threads the bilayer. At 165 to 175 (ILVGFRHLHCT) the chain is on the cytoplasmic side. Residues 176 to 201 (RNYIHLNLFASFILRALSVFIKDAAL) form a helical membrane-spanning segment. Topologically, residues 202-227 (KWMYSTAAQQHQWDGLLSYQDSLGCR) are extracellular. Cys226 and Cys296 are disulfide-bonded. The helical transmembrane segment at 228-251 (LVFLLMQYCVAANYYWLLVEGVYL) threads the bilayer. Residues 252 to 265 (YTLLAFSVFSEQRI) lie on the Cytoplasmic side of the membrane. A helical transmembrane segment spans residues 266–290 (FKLYLSIGWGVPLLFVIPWGIVKYL). At 291-305 (YEDEGCWTRNSNMNY) the chain is on the extracellular side. A helical transmembrane segment spans residues 306 to 328 (WLIIRLPILFAIGVNFLIFIRVI). The Cytoplasmic portion of the chain corresponds to 329–348 (CIVVSKLKANLMCKTDIKCR). At Cys341 the chain carries ADP-ribosylcysteine. Arg348 is subject to ADP-ribosylarginine. The helical transmembrane segment at 349–370 (LAKSTLTLIPLLGTHEVIFAFV) threads the bilayer. The tract at residues 352–355 (STLT) is important for allosteric inhibitor binding. Topologically, residues 371 to 383 (MDEHARGTLRFIK) are extracellular. A helical transmembrane segment spans residues 384–404 (LFTELSFTSFQGLMVAILYCF). Topologically, residues 405–463 (VNNEVQMEFRKCWERWRLEHLNIQRDCSMKPLKCPTSSVSSGATVGSSVYAATCQSSYS) are cytoplasmic.

It belongs to the G-protein coupled receptor 2 family. May form homodimers and heterodimers with GIPR. N-glycosylation enhances cell surface expression and lengthens receptor half-life by preventing degradation in the ER. As to expression, detected in pancreatic islets (at protein level). Detected in pancreatic islets and lungs.

Its subcellular location is the cell membrane. In terms of biological role, G-protein coupled receptor for glucagon-like peptide 1 (GLP-1). Ligand binding triggers activation of a signaling cascade that leads to the activation of adenylyl cyclase and increased intracellular cAMP levels. Plays a role in regulating insulin secretion in response to GLP-1. The sequence is that of Glucagon-like peptide 1 receptor (Glp1r) from Mus musculus (Mouse).